The chain runs to 88 residues: Phosphocarrier protein HPr (88 aa).

Residues 1 to 88 (MKKFQAVIKD…KACLEKNKVI (88 aa)) enclose the HPr domain. Catalysis depends on His-15, which acts as the Pros-phosphohistidine intermediate. The residue at position 47 (Ser-47) is a Phosphoserine; by HPrK/P.

This sequence belongs to the HPr family.

The protein resides in the cytoplasm. Phosphorylation on Ser-47 inhibits the phosphoryl transfer from enzyme I to HPr. General (non sugar-specific) component of the phosphoenolpyruvate-dependent sugar phosphotransferase system (sugar PTS). This major carbohydrate active-transport system catalyzes the phosphorylation of incoming sugar substrates concomitantly with their translocation across the cell membrane. The phosphoryl group from phosphoenolpyruvate (PEP) is transferred to the phosphoryl carrier protein HPr by enzyme I. Phospho-HPr then transfers it to the PTS EIIA domain. Functionally, P-Ser-HPr interacts with the catabolite control protein A (CcpA), forming a complex that binds to DNA at the catabolite response elements cre, operator sites preceding a large number of catabolite-regulated genes. Thus, P-Ser-HPr is a corepressor in carbon catabolite repression (CCR), a mechanism that allows bacteria to coordinate and optimize the utilization of available carbon sources. P-Ser-HPr also plays a role in inducer exclusion, in which it probably interacts with several non-PTS permeases and inhibits their transport activity. This chain is Phosphocarrier protein HPr (ptsH), found in Mycoplasma genitalium (strain ATCC 33530 / DSM 19775 / NCTC 10195 / G37) (Mycoplasmoides genitalium).